A 484-amino-acid polypeptide reads, in one-letter code: EF-hand calcium-binding domain-containing protein 14 (484 aa).

Disordered regions lie at residues 1 to 48 (MKKR…TDEE), 227 to 255 (GSMENNGSNQILPSPSPPSELDNKSHSES), and 313 to 395 (EQRT…FTSD). Positions 37-48 (PDSDSESSTDEE) are enriched in acidic residues. Composition is skewed to polar residues over residues 228–239 (SMENNGSNQILP), 315–324 (RTNVSSSTME), and 335–347 (LVTNRSDTVQAQS). EF-hand domains are found at residues 423 to 452 (SSIKDLQDLFHKTGQDVDGMLTYQELWNSL) and 453 to 484 (GSAMPRPESLRAFDSNGDGRYSFLELRLALGI). Ca(2+) contacts are provided by aspartate 466, asparagine 468, aspartate 470, arginine 472, and glutamate 477.

The protein is EF-hand calcium-binding domain-containing protein 14 (Efcab14) of Mus musculus (Mouse).